The following is a 451-amino-acid chain: Sensor histidine kinase CssS (451 aa).

The Cytoplasmic segment spans residues 1–9 (MKNKPLAFQ). Residues 10 to 30 (IWVVISGILLAISILLLVLFS) form a helical membrane-spanning segment. Residues 31-165 (NTLRDFFTNE…RDDLAYTLFK (135 aa)) are Extracellular-facing. The helical transmembrane segment at 166–186 (QLLFIIAVVILLSWIPAIWLA) threads the bilayer. One can recognise an HAMP domain in the interval 187 to 239 (KYLSRPLVSFEKHVKRISEQDWDDPVKVDRKDEIGKLGHTIEEMRQKLVQKDE). At 187–451 (KYLSRPLVSF…GVTYRIAVPK (265 aa)) the chain is on the cytoplasmic side. The Histidine kinase domain occupies 247–451 (NISHDLKTPV…GVTYRIAVPK (205 aa)). His-250 bears the Phosphohistidine; by autocatalysis mark.

The protein localises to the cell membrane. The enzyme catalyses ATP + protein L-histidine = ADP + protein N-phospho-L-histidine.. Its function is as follows. Member of the two-component regulatory system CssS/CssR required to control the cellular response to secretion stress. Required for the transcription of htrA. Could detect misfolded proteins at the membrane-cell wall interface and then activate CssR by phosphorylation. The sequence is that of Sensor histidine kinase CssS (cssS) from Bacillus subtilis (strain 168).